Here is an 895-residue protein sequence, read N- to C-terminus: Protein translocase subunit SecA (895 aa).

ATP is bound by residues Gln87, 105 to 109 (GEGKT), and Asp512. A compositionally biased stretch (basic and acidic residues) spans 833 to 852 (TQEEVEQAERQRQEMAKRET). The disordered stretch occupies residues 833 to 895 (TQEEVEQAER…KHCHGSKAKY (63 aa)). Zn(2+)-binding residues include Cys877, Cys879, Cys888, and His889. The span at 883–895 (KKYKHCHGSKAKY) shows a compositional bias: basic residues.

This sequence belongs to the SecA family. In terms of assembly, monomer and homodimer. Part of the essential Sec protein translocation apparatus which comprises SecA, SecYEG and auxiliary proteins SecDF-YajC and YidC. Zn(2+) is required as a cofactor.

It is found in the cell inner membrane. The protein resides in the cytoplasm. The enzyme catalyses ATP + H2O + cellular proteinSide 1 = ADP + phosphate + cellular proteinSide 2.. Functionally, part of the Sec protein translocase complex. Interacts with the SecYEG preprotein conducting channel. Has a central role in coupling the hydrolysis of ATP to the transfer of proteins into and across the cell membrane, serving both as a receptor for the preprotein-SecB complex and as an ATP-driven molecular motor driving the stepwise translocation of polypeptide chains across the membrane. The protein is Protein translocase subunit SecA of Pasteurella multocida (strain Pm70).